The following is a 62-amino-acid chain: Large ribosomal subunit protein bL28 (62 aa).

Belongs to the bacterial ribosomal protein bL28 family.

This is Large ribosomal subunit protein bL28 from Thermobifida fusca (strain YX).